A 167-amino-acid polypeptide reads, in one-letter code: Golgin subfamily A member 7B (167 aa).

Residues Cys78 and Cys81 are each lipidated (S-palmitoyl cysteine). A disordered region spans residues 140–167; it reads RCSSGSSSSGSSSGSGSSSAGGGGAGAR. Residues 142 to 157 show a composition bias toward low complexity; the sequence is SSGSSSSGSSSGSGSS. The segment covering 158–167 has biased composition (gly residues); the sequence is SAGGGGAGAR.

Belongs to the ERF4 family. In terms of processing, palmitoylated by ZDHHC5. Palmitoylation is required for the maintenance of ZDHHC5 at the plasma membrane.

The protein localises to the cell membrane. It localises to the golgi apparatus membrane. Play a role in cell adhesion by regulating the plasma membrane localization of the palmitoyltransferase ZDHHC5. May be involved in protein transport from Golgi to cell surface. This Mus musculus (Mouse) protein is Golgin subfamily A member 7B (GOLGA7B).